The following is a 555-amino-acid chain: Connector enhancer of kinase suppressor of ras 3 (555 aa).

The SAM domain occupies 7-72 (WSPKQVVDWT…LEAVDLLCAL (66 aa)). Positions 80–174 (NMKNLVLKLR…TTVQKDCFVA (95 aa)) constitute a CRIC domain. The 83-residue stretch at 211-293 (EVHLPNIKPG…GVVLLLKKRP (83 aa)) folds into the PDZ domain. 3 disordered regions span residues 309-334 (WKPP…DTSL), 347-390 (PPPP…FLDQ), and 517-537 (IPFQ…KSSS). One can recognise a DUF1170 domain in the interval 325-546 (SPESTMDTSL…STEPSLLVSW (222 aa)). Phosphoserine occurs at positions 381 and 383.

Belongs to the CNKSR family. Interacts with epithelial sodium channel ENaC. Interacts directly with SCNN1A (ENaC subunit alpha) and SCNN1B (ENaC subunit beta) C-terminal tails. Interacts with ENaC regulatory proteins NEDD4L, RAF1 and SGK1.

It localises to the cytoplasm. It is found in the apical cell membrane. Its function is as follows. Involved in transepithelial sodium transport. Regulates aldosterone-induced and epithelial sodium channel (ENaC)-mediated sodium transport through regulation of ENaC cell surface expression. Acts as a scaffold protein coordinating the assembly of an ENaC-regulatory complex (ERC). In Homo sapiens (Human), this protein is Connector enhancer of kinase suppressor of ras 3 (CNKSR3).